Here is a 67-residue protein sequence, read N- to C-terminus: DNA-directed RNA polymerase subunit omega (67 aa).

This sequence belongs to the RNA polymerase subunit omega family. In terms of assembly, the RNAP catalytic core consists of 2 alpha, 1 beta, 1 beta' and 1 omega subunit. When a sigma factor is associated with the core the holoenzyme is formed, which can initiate transcription.

The enzyme catalyses RNA(n) + a ribonucleoside 5'-triphosphate = RNA(n+1) + diphosphate. Promotes RNA polymerase assembly. Latches the N- and C-terminal regions of the beta' subunit thereby facilitating its interaction with the beta and alpha subunits. This is DNA-directed RNA polymerase subunit omega from Ralstonia nicotianae (strain ATCC BAA-1114 / GMI1000) (Ralstonia solanacearum).